A 462-amino-acid chain; its full sequence is Fumarate hydratase class II (462 aa).

Residues 98–100, Arg126, 129–132, 139–141, and Thr187 each bind substrate; these read SGT, HPND, and SSN. The tract at residues 120-141 is disordered; sequence GTRGKGRKVHPNDHVNKGQSSN. The active-site Proton donor/acceptor is His188. Residue Ser318 is part of the active site. Substrate is bound by residues Ser319 and 324–326; that span reads KVN.

The protein belongs to the class-II fumarase/aspartase family. Fumarase subfamily. In terms of assembly, homotetramer.

The protein localises to the cytoplasm. It catalyses the reaction (S)-malate = fumarate + H2O. It participates in carbohydrate metabolism; tricarboxylic acid cycle; (S)-malate from fumarate: step 1/1. Functionally, involved in the TCA cycle. Catalyzes the stereospecific interconversion of fumarate to L-malate. This chain is Fumarate hydratase class II, found in Nitrosomonas europaea (strain ATCC 19718 / CIP 103999 / KCTC 2705 / NBRC 14298).